The primary structure comprises 287 residues: Polyamine aminopropyltransferase (287 aa).

Residues 5–238 (ETWHETLHDH…GIMTFAWASQ (234 aa)) form the PABS domain. Gln33 lines the S-methyl-5'-thioadenosine pocket. Spermidine contacts are provided by His64 and Asp88. S-methyl-5'-thioadenosine contacts are provided by residues Glu108 and 140-141 (DG). Catalysis depends on Asp158, which acts as the Proton acceptor. Spermidine is bound at residue 158–161 (DCTD). Pro165 lines the S-methyl-5'-thioadenosine pocket.

The protein belongs to the spermidine/spermine synthase family. In terms of assembly, homodimer or homotetramer.

The protein localises to the cytoplasm. It catalyses the reaction S-adenosyl 3-(methylsulfanyl)propylamine + putrescine = S-methyl-5'-thioadenosine + spermidine + H(+). The protein operates within amine and polyamine biosynthesis; spermidine biosynthesis; spermidine from putrescine: step 1/1. Its function is as follows. Catalyzes the irreversible transfer of a propylamine group from the amino donor S-adenosylmethioninamine (decarboxy-AdoMet) to putrescine (1,4-diaminobutane) to yield spermidine. This chain is Polyamine aminopropyltransferase, found in Sodalis glossinidius (strain morsitans).